The primary structure comprises 200 residues: 3-isopropylmalate dehydratase small subunit (200 aa).

Belongs to the LeuD family. LeuD type 1 subfamily. As to quaternary structure, heterodimer of LeuC and LeuD.

It carries out the reaction (2R,3S)-3-isopropylmalate = (2S)-2-isopropylmalate. The protein operates within amino-acid biosynthesis; L-leucine biosynthesis; L-leucine from 3-methyl-2-oxobutanoate: step 2/4. Functionally, catalyzes the isomerization between 2-isopropylmalate and 3-isopropylmalate, via the formation of 2-isopropylmaleate. The chain is 3-isopropylmalate dehydratase small subunit from Saccharopolyspora erythraea (strain ATCC 11635 / DSM 40517 / JCM 4748 / NBRC 13426 / NCIMB 8594 / NRRL 2338).